Reading from the N-terminus, the 1004-residue chain is Sal-like protein 2 (1004 aa).

Disordered regions lie at residues 1–33 (MSRR…EDHP), 51–122 (AHQN…EESS), 137–177 (GGGL…SGHL), 220–270 (PASP…EPPK), and 285–307 (PFSV…ALPG). Residues 34-56 (QVCAKCCAQFSDPTEFLAHQNSC) form a C2H2-type 1; atypical zinc finger. The span at 71–81 (NPSNSSASSAP) shows a compositional bias: low complexity. Positions 83–98 (PEGHSRSQVMDTEHSN) are enriched in basic and acidic residues. A compositionally biased stretch (low complexity) spans 99 to 110 (PPDSGSSGAPDP). Residues 151–171 (PLPPESTPAPPPPPPPPPPPG) are compositionally biased toward pro residues. The residue at position 243 (S243) is a Phosphoserine. 5 consecutive C2H2-type zinc fingers follow at residues 372-394 (HKCR…LRSH), 400-422 (YKCN…FHRH), 629-651 (NQCV…YGQH), 657-679 (FKCK…FVGH), and 689-711 (NSCP…VRMH). Residues 712–910 (LGGQIPNGGS…PGESSGRKAC (199 aa)) are disordered. A compositionally biased stretch (polar residues) spans 731-742 (QENSSEQSTASG). The span at 756-779 (PEEEMSEEEEEDEEEEEDVTDEDS) shows a compositional bias: acidic residues. A phosphoserine mark is found at S794, S799, and S803. Positions 800-809 (EEVSGAEEEV) are enriched in acidic residues. The span at 810–819 (ATSVAAPTTV) shows a compositional bias: low complexity. Residues 820-829 (KEMDSNEKAP) are compositionally biased toward basic and acidic residues. A compositionally biased stretch (pro residues) spans 832 to 841 (TLPPPPPPPD). Basic and acidic residues predominate over residues 896–910 (AMKKDPGESSGRKAC). A Glycyl lysine isopeptide (Lys-Gly) (interchain with G-Cter in ubiquitin) cross-link involves residue K908. C2H2-type zinc fingers lie at residues 908-930 (KACE…QKTH) and 937-961 (FTCV…LAHH).

Belongs to the sal C2H2-type zinc-finger protein family. In terms of tissue distribution, expressed throughout embryonic development. In adult predominantly in brain.

The protein resides in the nucleus. Its function is as follows. Probable transcription factor that plays a role in eye development before, during, and after optic fissure closure. This Mus musculus (Mouse) protein is Sal-like protein 2 (Sall2).